Reading from the N-terminus, the 1058-residue chain is Carbamoyl phosphate synthase large chain (1058 aa).

The interval 1 to 401 (MPKRTDIQKI…SLLKACRSLE (401 aa)) is carboxyphosphate synthetic domain. The ATP site is built by Arg-129, Arg-169, Gly-175, Gly-176, Arg-208, Ile-210, Glu-215, Gly-241, Ile-242, His-243, Gln-284, and Glu-298. Residues 133 to 327 (KQLMEELEQP…IAKLAAKIAV (195 aa)) enclose the ATP-grasp 1 domain. Mg(2+) is bound by residues Gln-284, Glu-298, and Asn-300. Mn(2+) is bound by residues Gln-284, Glu-298, and Asn-300. The oligomerization domain stretch occupies residues 402 to 546 (IGVHHNEIPE…YSTYGWENES (145 aa)). The tract at residues 547-929 (IRSDKESVLV…ALYKAFEASY (383 aa)) is carbamoyl phosphate synthetic domain. Residues 671–861 (EQALKELDIP…MAQVATKLIL (191 aa)) enclose the ATP-grasp 2 domain. ATP-binding residues include Arg-707, Ser-746, Ile-748, Glu-752, Gly-777, Val-778, His-779, Ser-780, Gln-820, and Glu-832. Residues Gln-820, Glu-832, and Asn-834 each coordinate Mg(2+). Positions 820, 832, and 834 each coordinate Mn(2+). An MGS-like domain is found at 930-1058 (LHLPTFGNVV…ESRSFVTEAI (129 aa)). Positions 930–1058 (LHLPTFGNVV…ESRSFVTEAI (129 aa)) are allosteric domain.

It belongs to the CarB family. In terms of assembly, composed of two chains; the small (or glutamine) chain promotes the hydrolysis of glutamine to ammonia, which is used by the large (or ammonia) chain to synthesize carbamoyl phosphate. Tetramer of heterodimers (alpha,beta)4. Requires Mg(2+) as cofactor. It depends on Mn(2+) as a cofactor.

It carries out the reaction hydrogencarbonate + L-glutamine + 2 ATP + H2O = carbamoyl phosphate + L-glutamate + 2 ADP + phosphate + 2 H(+). The enzyme catalyses hydrogencarbonate + NH4(+) + 2 ATP = carbamoyl phosphate + 2 ADP + phosphate + 2 H(+). It participates in amino-acid biosynthesis; L-arginine biosynthesis; carbamoyl phosphate from bicarbonate: step 1/1. The protein operates within pyrimidine metabolism; UMP biosynthesis via de novo pathway; (S)-dihydroorotate from bicarbonate: step 1/3. Large subunit of the glutamine-dependent carbamoyl phosphate synthetase (CPSase). CPSase catalyzes the formation of carbamoyl phosphate from the ammonia moiety of glutamine, carbonate, and phosphate donated by ATP, constituting the first step of 2 biosynthetic pathways, one leading to arginine and/or urea and the other to pyrimidine nucleotides. The large subunit (synthetase) binds the substrates ammonia (free or transferred from glutamine from the small subunit), hydrogencarbonate and ATP and carries out an ATP-coupled ligase reaction, activating hydrogencarbonate by forming carboxy phosphate which reacts with ammonia to form carbamoyl phosphate. The chain is Carbamoyl phosphate synthase large chain from Streptococcus pneumoniae serotype 2 (strain D39 / NCTC 7466).